The sequence spans 135 residues: Large ribosomal subunit protein uL22c (135 aa).

The protein belongs to the universal ribosomal protein uL22 family. In terms of assembly, part of the 50S ribosomal subunit.

It is found in the plastid. Functionally, this protein binds specifically to 23S rRNA. Its function is as follows. The globular domain of the protein is located near the polypeptide exit tunnel on the outside of the subunit, while an extended beta-hairpin is found that lines the wall of the exit tunnel in the center of the 70S ribosome. The polypeptide is Large ribosomal subunit protein uL22c (rpl22) (Cuscuta reflexa (Southern Asian dodder)).